Consider the following 419-residue polypeptide: WD repeat-containing protein JIP5 (419 aa).

WD repeat units follow at residues 4–45, 66–105, 108–147, 180–220, 224–263, 268–308, and 351–390; these read ALSS…HNQS, PSHK…VKAR, RAHE…EGDA, DQED…KGVE, DQED…LDHA, GHPS…GIVG, and DAAE…QPPP. Positions 172-192 are disordered; sequence DPPRSKKKDQEDDLKRKRDEE. Positions 372 to 408 are disordered; it reads SADGSDESAGESDVMQPPPATKRRTAKSKAGKKSVHD. Positions 392–404 are enriched in basic residues; it reads TKRRTAKSKAGKK.

The protein belongs to the WD repeat WDR55 family.

The protein localises to the nucleus. Its subcellular location is the nucleolus. The chain is WD repeat-containing protein JIP5 (JIP5) from Malassezia globosa (strain ATCC MYA-4612 / CBS 7966) (Dandruff-associated fungus).